Consider the following 450-residue polypeptide: Chromosomal replication initiator protein DnaA 2 (450 aa).

The interval Met1–Lys87 is domain I, interacts with DnaA modulators. Positions Lys87 to Leu114 are domain II. Residues Lys115–Cys330 are domain III, AAA+ region. ATP-binding residues include Gly159, Gly161, Lys162, and Thr163. The tract at residues Arg331–Gly450 is domain IV, binds dsDNA.

This sequence belongs to the DnaA family. Oligomerizes as a right-handed, spiral filament on DNA at oriC.

It localises to the cytoplasm. Its function is as follows. Plays an essential role in the initiation and regulation of chromosomal replication. ATP-DnaA binds to the origin of replication (oriC) to initiate formation of the DNA replication initiation complex once per cell cycle. Binds the DnaA box (a 9 base pair repeat at the origin) and separates the double-stranded (ds)DNA. Forms a right-handed helical filament on oriC DNA; dsDNA binds to the exterior of the filament while single-stranded (ss)DNA is stabiized in the filament's interior. The ATP-DnaA-oriC complex binds and stabilizes one strand of the AT-rich DNA unwinding element (DUE), permitting loading of DNA polymerase. After initiation quickly degrades to an ADP-DnaA complex that is not apt for DNA replication. Binds acidic phospholipids. This Chlamydia pneumoniae (Chlamydophila pneumoniae) protein is Chromosomal replication initiator protein DnaA 2.